The sequence spans 290 residues: Ribosomal RNA small subunit methyltransferase A (290 aa).

Residues N27, L29, G54, E75, D100, and N125 each contribute to the S-adenosyl-L-methionine site.

Belongs to the class I-like SAM-binding methyltransferase superfamily. rRNA adenine N(6)-methyltransferase family. RsmA subfamily.

It is found in the cytoplasm. The enzyme catalyses adenosine(1518)/adenosine(1519) in 16S rRNA + 4 S-adenosyl-L-methionine = N(6)-dimethyladenosine(1518)/N(6)-dimethyladenosine(1519) in 16S rRNA + 4 S-adenosyl-L-homocysteine + 4 H(+). In terms of biological role, specifically dimethylates two adjacent adenosines (A1518 and A1519) in the loop of a conserved hairpin near the 3'-end of 16S rRNA in the 30S particle. May play a critical role in biogenesis of 30S subunits. This is Ribosomal RNA small subunit methyltransferase A from Streptococcus pyogenes serotype M3 (strain ATCC BAA-595 / MGAS315).